Consider the following 266-residue polypeptide: Cell wall synthesis protein Wag31 (266 aa).

A coiled-coil region spans residues 31–64 (FLDLVENELTQLIEENSDLRQRIEELDHELAAGG). Thr-77 carries the post-translational modification Phosphothreonine. Residues 152–203 (TAEATVAEAQQRADAMLADAQTRSEVQSRQAQEKADALQAEAERKHSEIMGA) are a coiled coil. The tract at residues 239–266 (ELGQRGSAAPVDSNADAGGFDQFNRGNN) is disordered.

It belongs to the DivIVA family. In terms of assembly, forms homooligomers. Post-translationally, phosphorylated by PknA.

It localises to the cytoplasm. In terms of biological role, important for maintaining cell shape and cell wall integrity by localizing peptidoglycan synthesis to the cell poles. In Mycobacterium leprae (strain TN), this protein is Cell wall synthesis protein Wag31 (wag31).